The primary structure comprises 805 residues: Transmembrane channel-like protein 6 (805 aa).

The disordered stretch occupies residues 1–29 (MAQPLAFILDVPETPGDQGQGPSPYDESE). The Lumenal portion of the chain corresponds to 1–209 (MAQPLAFILD…SCCGRLRYAC (209 aa)). T89 carries the phosphothreonine modification. The residue at position 94 (R94) is an Omega-N-methylarginine. A glycan (N-linked (GlcNAc...) asparagine) is linked at N103. At T105 the chain carries Phosphothreonine. A helical transmembrane segment spans residues 210–230 (VLALHSLGLALLSALQALMPW). Topologically, residues 231–249 (RYALKRIGGQFGSSVLSYF) are cytoplasmic. The helical transmembrane segment at 250–270 (LFLKTLLAFNALLLLLLVAFI) threads the bilayer. At 271-338 (MGPQVAFPPA…TPRVGGLPYN (68 aa)) the chain is on the lumenal side. N312 is a glycosylation site (N-linked (GlcNAc...) asparagine). The helical transmembrane segment at 339–359 (MPLAYLSTVGVSFFITCITLV) threads the bilayer. The Cytoplasmic portion of the chain corresponds to 360–431 (YSMAHSFGES…RSVCGRLRQA (72 aa)). The chain crosses the membrane as a helical span at residues 432–452 (AVLGLVWLLCLGTALGCAVAV). Residues 453–469 (HVFSEFMIQSPEAAGQE) are Lumenal-facing. The chain crosses the membrane as a helical span at residues 470–490 (AVLLVLPLVVGLLNLGAPYLC). Residues 491–505 (RVLAALEPHDSPVLE) are Cytoplasmic-facing. A helical membrane pass occupies residues 506–526 (VYVAICRNLILKLAILGTLCY). Topologically, residues 527–553 (HWLGRRVGVLQGQCWEDFVGQELYRFL) are lumenal. Residues 554-574 (VMDFVLMLLDTLFGELVWRII) traverse the membrane as a helical segment. The Cytoplasmic portion of the chain corresponds to 575 to 604 (SEKKLKRRRKPEFDIARNVLELIYGQTLTW). Residues 605–625 (LGVLFSPLLPAVQIIKLLLVF) form a helical membrane-spanning segment. At 626-650 (YVKKTSLLANCQAPRRPWLASHMST) the chain is on the lumenal side. A helical membrane pass occupies residues 651–671 (VFLTLLCFPAFLGAAVFLCYA). The Cytoplasmic portion of the chain corresponds to 672 to 722 (VWQVKPSSTCGPFRTLDTMYEAGRVWVRHLEAAGPRVSWLPWVHRYLMENT). The chain crosses the membrane as a helical span at residues 723–743 (FFVFLVSALLLAVIYLNIQVV). Residues 744 to 805 (RGQRKVICLL…PALLTDEQDA (62 aa)) are Lumenal-facing. Residues 778-805 (KEREERSRVGTTEEAAAPPALLTDEQDA) are disordered.

It belongs to the TMC family. Interacts with TMC8. Interacts and forms a complex with TMC8 and CIB1; the interaction stabilizes each component of the complex. Interacts and forms a complex with TMC8 and SLC30A1/ZNT1; the interaction regulates zinc transport into the ER. In terms of assembly, (Microbial infection) Interacts with human papillomavirus 16/HPV16 protein E5; the interaction alleviates TMC6-mediated transcription factors inhibition. As to expression, expressed in placenta, prostate, testis, activated T-lymphocytes and lymphokine-activated killer (LAK) lymphocytes.

It is found in the endoplasmic reticulum membrane. The protein localises to the golgi apparatus membrane. The protein resides in the nucleus membrane. Acts as a regulatory protein involved in the regulation of numerous cellular processes. Together with its homolog TMC8/EVER2, forms a complex with CIB1 in lymphocytes and keratynocytes where TMC6 and TMC8 stabilize CIB1 and reciprocally. Together with TMC8, also forms a complex with and activates zinc transporter ZNT1 at the ER membrane of keratynocytes, thereby facilitating zinc uptake into the ER. Down-regulates the activity of transcription factors induced by zinc and cytokines. Also plays a role in thermal sensation by inhibiting the M-channel (KCNQ2-KCNQ3 channel) current in primary sensory neurons. This chain is Transmembrane channel-like protein 6, found in Homo sapiens (Human).